A 260-amino-acid chain; its full sequence is Hemin import ATP-binding protein HmuV (260 aa).

One can recognise an ABC transporter domain in the interval 2 to 239 (IRAENITLIR…ETIARVYGIG (238 aa)). Position 34–41 (34–41 (GPNGAGKS)) interacts with ATP.

Belongs to the ABC transporter superfamily. Heme (hemin) importer (TC 3.A.1.14.5) family. As to quaternary structure, the complex is composed of two ATP-binding proteins (HmuV), two transmembrane proteins (HmuU) and a solute-binding protein (HmuT).

It localises to the cell inner membrane. Part of the ABC transporter complex HmuTUV involved in hemin import. Responsible for energy coupling to the transport system. The sequence is that of Hemin import ATP-binding protein HmuV from Agrobacterium fabrum (strain C58 / ATCC 33970) (Agrobacterium tumefaciens (strain C58)).